The sequence spans 220 residues: Iron-sulfur cluster repair protein YtfE (220 aa).

The protein belongs to the RIC family. YtfE subfamily. In terms of assembly, homodimer.

It localises to the cytoplasm. Its function is as follows. Di-iron-containing protein involved in the repair of iron-sulfur clusters damaged by oxidative and nitrosative stress conditions. The sequence is that of Iron-sulfur cluster repair protein YtfE from Salmonella choleraesuis (strain SC-B67).